A 211-amino-acid chain; its full sequence is Histidine biosynthesis bifunctional protein HisIE (211 aa).

The segment at 1–122 is phosphoribosyl-AMP cyclohydrolase; the sequence is MSFKAAEVSS…DAQEESQMVW (122 aa). The phosphoribosyl-ATP pyrophosphohydrolase stretch occupies residues 123-211; sequence LHQLEQLLAA…VVNKLKERHK (89 aa).

The protein in the N-terminal section; belongs to the PRA-CH family. In the C-terminal section; belongs to the PRA-PH family.

It localises to the cytoplasm. It carries out the reaction 1-(5-phospho-beta-D-ribosyl)-ATP + H2O = 1-(5-phospho-beta-D-ribosyl)-5'-AMP + diphosphate + H(+). The enzyme catalyses 1-(5-phospho-beta-D-ribosyl)-5'-AMP + H2O = 1-(5-phospho-beta-D-ribosyl)-5-[(5-phospho-beta-D-ribosylamino)methylideneamino]imidazole-4-carboxamide. The protein operates within amino-acid biosynthesis; L-histidine biosynthesis; L-histidine from 5-phospho-alpha-D-ribose 1-diphosphate: step 2/9. It participates in amino-acid biosynthesis; L-histidine biosynthesis; L-histidine from 5-phospho-alpha-D-ribose 1-diphosphate: step 3/9. The sequence is that of Histidine biosynthesis bifunctional protein HisIE from Vibrio parahaemolyticus serotype O3:K6 (strain RIMD 2210633).